The following is a 393-amino-acid chain: Formate-dependent phosphoribosylglycinamide formyltransferase (393 aa).

N(1)-(5-phospho-beta-D-ribosyl)glycinamide is bound by residues 22 to 23 and glutamate 82; that span reads EL. ATP is bound by residues arginine 114, lysine 155, 160–165, 195–198, and glutamate 203; these read SSGKGQ and EGFV. The ATP-grasp domain occupies 119–308; that stretch reads RLAAEELGLV…EFALHVRAIL (190 aa). 2 residues coordinate Mg(2+): glutamate 267 and glutamate 279. N(1)-(5-phospho-beta-D-ribosyl)glycinamide-binding positions include aspartate 286, lysine 356, and 363-364; that span reads RR.

This sequence belongs to the PurK/PurT family. As to quaternary structure, homodimer.

The enzyme catalyses N(1)-(5-phospho-beta-D-ribosyl)glycinamide + formate + ATP = N(2)-formyl-N(1)-(5-phospho-beta-D-ribosyl)glycinamide + ADP + phosphate + H(+). It functions in the pathway purine metabolism; IMP biosynthesis via de novo pathway; N(2)-formyl-N(1)-(5-phospho-D-ribosyl)glycinamide from N(1)-(5-phospho-D-ribosyl)glycinamide (formate route): step 1/1. Involved in the de novo purine biosynthesis. Catalyzes the transfer of formate to 5-phospho-ribosyl-glycinamide (GAR), producing 5-phospho-ribosyl-N-formylglycinamide (FGAR). Formate is provided by PurU via hydrolysis of 10-formyl-tetrahydrofolate. The protein is Formate-dependent phosphoribosylglycinamide formyltransferase of Solidesulfovibrio magneticus (strain ATCC 700980 / DSM 13731 / RS-1) (Desulfovibrio magneticus).